The sequence spans 43 residues: Potassium channel toxin gamma-KTx 4.6 (43 aa).

4 disulfide bridges follow: cysteine 5/cysteine 23, cysteine 11/cysteine 34, cysteine 20/cysteine 39, and cysteine 24/cysteine 41.

Belongs to the ergtoxin family. Gamma-KTx 4 subfamily. As to expression, expressed by the venom gland.

Its subcellular location is the secreted. In terms of biological role, reversibly blocks Kv11/ERG potassium channels. The polypeptide is Potassium channel toxin gamma-KTx 4.6 (Centruroides limpidus (Mexican scorpion)).